Consider the following 436-residue polypeptide: MGKGPLSFRRLSSIRHRKKGSAVKDDSAQTSTPSSPPPPLPIHAGGSAVGATGKAKKKTGGARLWMRFDRTGAMEVVECDKSTIIKRASVPARDLRILGPVFSHSSNILAREKAIVVNLEVIKAIVTAEEVLLLDPLRPEVLPFVERLKQQFPQRNGNENALQASANVQSPLDPEAAEGLQSELPFEFQVLEIALEVVCSFVDKSVAALETEAWPVLDELTKNVSTENLEYVRSLKSNLTRLLARVQKVRDELEHLLDDNEDMADLYLTRKWIQNQQTEAILAGTASNSIALPAHNTSNLHRLTSNRSASMVTSNTEEDDVEDLEMLLEAYFMQLDGMRNKILTVREYIDDTEDYVNIQLDNQRNELIQLQLTLTIASFAIAAETLLASLFGMNIPCPLYSIHGVFGYFVWSVTALCIVLFMVTLGYARWKKLLGS.

The tract at residues 1-56 (MGKGPLSFRRLSSIRHRKKGSAVKDDSAQTSTPSSPPPPLPIHAGGSAVGATGKAK) is disordered. Over residues 12–21 (SSIRHRKKGS) the composition is skewed to basic residues. Low complexity predominate over residues 44–53 (AGGSAVGATG). Transmembrane regions (helical) follow at residues 372 to 392 (LTLT…SLFG) and 405 to 425 (VFGY…MVTL). The short motif at 392–394 (GMN) is the Required for magnesium transport activity element.

It belongs to the CorA metal ion transporter (MIT) (TC 1.A.35.5) family. Expressed in the whole plant except roots.

It is found in the membrane. Its function is as follows. Magnesium transporter that may mediate the influx of magnesium. The polypeptide is Magnesium transporter MRS2-4 (MRS2-4) (Arabidopsis thaliana (Mouse-ear cress)).